A 341-amino-acid polypeptide reads, in one-letter code: Biotin synthase (341 aa).

Residues 43–266 (SEIQLSQLLS…IAVARIVCPK (224 aa)) enclose the Radical SAM core domain. [4Fe-4S] cluster-binding residues include cysteine 58, cysteine 62, and cysteine 65. Residues cysteine 102, cysteine 133, cysteine 193, and arginine 270 each contribute to the [2Fe-2S] cluster site.

This sequence belongs to the radical SAM superfamily. Biotin synthase family. Homodimer. [4Fe-4S] cluster serves as cofactor. It depends on [2Fe-2S] cluster as a cofactor.

The catalysed reaction is (4R,5S)-dethiobiotin + (sulfur carrier)-SH + 2 reduced [2Fe-2S]-[ferredoxin] + 2 S-adenosyl-L-methionine = (sulfur carrier)-H + biotin + 2 5'-deoxyadenosine + 2 L-methionine + 2 oxidized [2Fe-2S]-[ferredoxin]. It participates in cofactor biosynthesis; biotin biosynthesis; biotin from 7,8-diaminononanoate: step 2/2. Functionally, catalyzes the conversion of dethiobiotin (DTB) to biotin by the insertion of a sulfur atom into dethiobiotin via a radical-based mechanism. The protein is Biotin synthase of Caulobacter vibrioides (strain ATCC 19089 / CIP 103742 / CB 15) (Caulobacter crescentus).